Here is a 325-residue protein sequence, read N- to C-terminus: Metacaspase-9 (325 aa).

Active-site residues include His-95 and Cys-147. Position 147 is an S-nitrosocysteine (Cys-147). Residue Asn-177 is glycosylated (N-linked (GlcNAc...) asparagine).

This sequence belongs to the peptidase C14B family. Post-translationally, the two subunits are derived from the precursor sequence by an autocatalytic mechanism. In terms of processing, S-nitrosylation at Cys-147 suppresses both autoprocessing and proteolytic activity of the full-length protein, but does not affect the activity of the mature processed form. As to expression, expressed in root tips, cauline leaves, flowers and siliques.

It is found in the secreted. It localises to the extracellular space. The protein localises to the apoplast. Inhibited by serpin ZX and nitric oxide through cysteine nitrosylation. In terms of biological role, cysteine protease that cleaves specifically after arginine or lysine residues. Does not cleave caspase-specific substrates. Required for proteolytic processing of GRI. The protein is Metacaspase-9 (AMC9) of Arabidopsis thaliana (Mouse-ear cress).